Consider the following 248-residue polypeptide: MPRFRLDIEYDGSLFAGWQHQADQPSVQQAIEQAIEKFCGEAVRLRAAGRTDAGVHASAQVAHVDLAKPWPGDKVRDAVNAHLQAAGAHVAILKAAIVPDDFDARFSATGRHYLYRILNRRAPAALEKGKVWWVPKRLDAGAMHEAAKLLLGRHDFTTFRSTQCQANSPVRTLERLDVSRAGDMIEVRASARSFLHNQVRSMVGSLKRVGDGGWTEAELKAALEARDRAACGQVAPPDGLFLIGVDYP.

D52 functions as the Nucleophile in the catalytic mechanism. Y113 provides a ligand contact to substrate.

Belongs to the tRNA pseudouridine synthase TruA family. In terms of assembly, homodimer.

The enzyme catalyses uridine(38/39/40) in tRNA = pseudouridine(38/39/40) in tRNA. In terms of biological role, formation of pseudouridine at positions 38, 39 and 40 in the anticodon stem and loop of transfer RNAs. This is tRNA pseudouridine synthase A from Mesorhizobium japonicum (strain LMG 29417 / CECT 9101 / MAFF 303099) (Mesorhizobium loti (strain MAFF 303099)).